We begin with the raw amino-acid sequence, 244 residues long: Probable hydrolase R7 (244 aa).

An N-terminal signal peptide occupies residues 1–20 (MTKPFILLVPGSFAPETIYA). Residues aspartate 192 and histidine 224 each act as charge relay system in the active site. A glycan (N-linked (GlcNAc...) asparagine) is linked at asparagine 227.

This sequence belongs to the AB hydrolase superfamily.

Its pathway is secondary metabolite biosynthesis. Functionally, probable hydrolase; part of the gene cluster that mediates the biosynthesis of squalestatin S1 (SQS1, also known as zaragozic acid A), a lead compound for the treatment of hyper-cholesterolemia by targeting squalene synthase (SS). Both phenylalanine and benzoic acid are known precursors of SQS1 and so it is unsurprising that the cluster also contains genes potentially involved in benzoate production such as phenyl-alanine ammonia lysase (PAL) M7, which catalyzes the first step in the degradation of phenylalanine, or the NADP-dependent dehydrogenase M3. The cluster contains two PKS encoding genes. The tetraketide synthase is responsible for the biosynthesis of the tetraketide sidechain of SQS1. The biosynthesis must involve 3 rounds of chain extension. After the first and second rounds methyl-transfer occurs, and in all rounds of extension the ketoreductase and dehydratase areactive. The enoyl reductase and C-MeT are not active in the final round of extension. The other PKS is therefore likely to encode squalestatin hexaketide synthase (SQHKS). The hexaketide main chain is initiated by benzoate which is an unusual starter unit for a highly reducing polyketide synthase. The cluster also contains a gene encoding a citrate synthase-like protein R3 presumably involved in linking the hexaketide to the oxaloacetate moiety. Formation of the tetraketide CoA may be catalyzed by the M9 CoA ligase, but the mechanism of release of the tetraketide and the hexaketide from their respective PKS remains unknown, although the cluster encodes a potential esterase (M8) and a possible hydrolase (M10) which could be involved in these processes. Two acyltransferases (AT), M4 and R4, are also encoded in the cluster. M4 is responsible for loading of the tetraketide sidechain from CoA onto the squalestatin core as the final step of biosynthesis. M4 appears to have a broad substrate selectivity for its acyl CoA substrate, allowing the in vitro synthesis of novel squalestatins. The biosynthesis of SQS1 requires several oxidative steps likely performed by oxidoreductases M1, R1 and R2. Finally, in support of the identification of the cluster as being responsible for SQS1 production, the cluster contains a gene encoding a putative squalene synthase (SS) R6, suggesting a likely mechanism for self-resistance. The sequence is that of Probable hydrolase R7 from Phoma sp. (strain ATCC 20986 / MF5453).